We begin with the raw amino-acid sequence, 78 residues long: U-scoloptoxin(04)-Er1b (78 aa).

An N-terminal signal peptide occupies residues 1-24; sequence MTRHLIFAAVLLVCLFVCWNAVGA. A propeptide spanning residues 25–28 is cleaved from the precursor; the sequence is QDAR.

The protein belongs to the scoloptoxin-04 family. Post-translationally, contains 2 disulfide bonds. Expressed by the venom gland.

The protein localises to the secreted. The polypeptide is U-scoloptoxin(04)-Er1b (Ethmostigmus rubripes (Giant centipede)).